The following is a 72-amino-acid chain: Translation initiation factor IF-1 (72 aa).

An S1-like domain is found at 1–72 (MTKEDNIEMQ…TKGRIIFRSR (72 aa)).

This sequence belongs to the IF-1 family. In terms of assembly, component of the 30S ribosomal translation pre-initiation complex which assembles on the 30S ribosome in the order IF-2 and IF-3, IF-1 and N-formylmethionyl-tRNA(fMet); mRNA recruitment can occur at any time during PIC assembly.

It is found in the cytoplasm. One of the essential components for the initiation of protein synthesis. Stabilizes the binding of IF-2 and IF-3 on the 30S subunit to which N-formylmethionyl-tRNA(fMet) subsequently binds. Helps modulate mRNA selection, yielding the 30S pre-initiation complex (PIC). Upon addition of the 50S ribosomal subunit IF-1, IF-2 and IF-3 are released leaving the mature 70S translation initiation complex. The protein is Translation initiation factor IF-1 of Buchnera aphidicola subsp. Schizaphis graminum (strain Sg).